Here is a 628-residue protein sequence, read N- to C-terminus: Putative lipase ATG15 (628 aa).

Residues 1–32 (MLAAEKRRLLHKTRPVSASEKPGSIYPQRALY) lie on the Cytoplasmic side of the membrane. A helical; Signal-anchor for type II membrane protein transmembrane segment spans residues 33-53 (LLVCFSIATISLGYLHFIGAI). Over 54–628 (DIGRFGISSV…GYDGDVDDDQ (575 aa)) the chain is Lumenal. N-linked (GlcNAc...) asparagine glycosylation is found at Asn261, Asn299, and Asn383. Ser401 serves as the catalytic Charge relay system. Residue Asn518 is glycosylated (N-linked (GlcNAc...) asparagine). The interval 540-605 (HDDDVPDEPE…ISEPSESPKK (66 aa)) is disordered. Over residues 562-586 (PSSSTSDGKNNRISSTATTTISPTS) the composition is skewed to low complexity. The segment covering 591–600 (PTSSDISEPS) has biased composition (polar residues).

It belongs to the AB hydrolase superfamily. Lipase family. As to quaternary structure, binds to both phosphatidylinositol (PI) and phosphatidylinositol 3,5-bisphosphate (PIP2).

It is found in the endosome. The protein resides in the multivesicular body membrane. The protein localises to the prevacuolar compartment membrane. The catalysed reaction is a triacylglycerol + H2O = a diacylglycerol + a fatty acid + H(+). Lipase which is essential for lysis of subvacuolar cytoplasm to vacuole targeted bodies and intravacuolar autophagic bodies. Involved in the lysis of intravacuolar multivesicular body (MVB) vesicles. The intravacuolar membrane disintegration by ATG15 is critical to life span extension. This Scheffersomyces stipitis (strain ATCC 58785 / CBS 6054 / NBRC 10063 / NRRL Y-11545) (Yeast) protein is Putative lipase ATG15 (ATG15).